A 110-amino-acid chain; its full sequence is Ribonuclease P protein component (110 aa).

It belongs to the RnpA family. Consists of a catalytic RNA component (M1 or rnpB) and a protein subunit.

It carries out the reaction Endonucleolytic cleavage of RNA, removing 5'-extranucleotides from tRNA precursor.. RNaseP catalyzes the removal of the 5'-leader sequence from pre-tRNA to produce the mature 5'-terminus. It can also cleave other RNA substrates such as 4.5S RNA. The protein component plays an auxiliary but essential role in vivo by binding to the 5'-leader sequence and broadening the substrate specificity of the ribozyme. The chain is Ribonuclease P protein component from Mesoplasma florum (strain ATCC 33453 / NBRC 100688 / NCTC 11704 / L1) (Acholeplasma florum).